We begin with the raw amino-acid sequence, 539 residues long: Glucose-6-phosphate isomerase (539 aa).

E349 functions as the Proton donor in the catalytic mechanism. Catalysis depends on residues H380 and K508.

It belongs to the GPI family.

The protein resides in the cytoplasm. The enzyme catalyses alpha-D-glucose 6-phosphate = beta-D-fructose 6-phosphate. Its pathway is carbohydrate biosynthesis; gluconeogenesis. It functions in the pathway carbohydrate degradation; glycolysis; D-glyceraldehyde 3-phosphate and glycerone phosphate from D-glucose: step 2/4. Catalyzes the reversible isomerization of glucose-6-phosphate to fructose-6-phosphate. The polypeptide is Glucose-6-phosphate isomerase (Caulobacter sp. (strain K31)).